A 189-amino-acid polypeptide reads, in one-letter code: Phosphoheptose isomerase (189 aa).

The region spanning 34–189 (LVEAFRKGNK…CDLVEKALFA (156 aa)) is the SIS domain. A substrate-binding site is contributed by 49–51 (NGG). Zn(2+) is bound by residues histidine 58 and glutamate 62. Residues glutamate 62, 91–92 (ND), 117–119 (STS), serine 122, and glutamine 169 contribute to the substrate site. Residues glutamine 169 and histidine 177 each coordinate Zn(2+).

It belongs to the SIS family. GmhA subfamily. Homotetramer. It depends on Zn(2+) as a cofactor.

Its subcellular location is the cytoplasm. The enzyme catalyses 2 D-sedoheptulose 7-phosphate = D-glycero-alpha-D-manno-heptose 7-phosphate + D-glycero-beta-D-manno-heptose 7-phosphate. It participates in carbohydrate biosynthesis; D-glycero-D-manno-heptose 7-phosphate biosynthesis; D-glycero-alpha-D-manno-heptose 7-phosphate and D-glycero-beta-D-manno-heptose 7-phosphate from sedoheptulose 7-phosphate: step 1/1. Functionally, catalyzes the isomerization of sedoheptulose 7-phosphate in D-glycero-D-manno-heptose 7-phosphate. In Pelobacter propionicus (strain DSM 2379 / NBRC 103807 / OttBd1), this protein is Phosphoheptose isomerase.